Here is a 330-residue protein sequence, read N- to C-terminus: 6-methylsalicylic acid decarboxylase acuB (330 aa).

Zn(2+) is bound by residues H6, H8, H156, and D276.

Belongs to the metallo-dependent hydrolases superfamily. ACMSD family. In terms of assembly, monomer.

Its subcellular location is the cytoplasm. It localises to the cytosol. It carries out the reaction 6-methylsalicylate + H(+) = 3-methylphenol + CO2. It participates in secondary metabolite biosynthesis. 6-methylsalicylic acid decarboxylase; part of the gene cluster that mediates the biosynthesis of aculins. The pathway begins with the synthesis of 6-methylsalicylic acid by the polyketide synthase (PKS) acuA via condensation of acetate and malonate units. The 6-methylsalicylic acid decarboxylase acuB then catalyzes the decarboxylation of 6-methylsalicylic acid to yield m-cresol (also known as 3-methylphenol). These first reactions occur in the cytosol. The intermediate m-cresol is then transported into the endoplasmic reticulum where the cytochrome P450 monooxygenase acuC converts it to m-hydroxybenzyl alcohol, which is further converted to gentisyl alcohol by the cytochrome P450 monooxygenase acuD. Gentisyl alcohol is further oxidized by the oxidoreductase acuE that probably catalyzes hydroxylation of the aromatic ring. The aromatic system might then be opened by oxidation through a Baeyer-Villiger type of oxidation, which could be catalyzed by acuF, with the carboxylic acid at C-1 subsequently reduced to an aldehyde by acuG. Subsequently, a hemiacetal is formed, before the dehydrogenase acuH would reduce the double bond between C-4 and C-6. Finally, keto-enol tautomerism results in formation of aculinic acid, which exists as two diastereomers (both R/S configurations at C-1) by non-enzymatic hemiacetal formation. The carboxypeptidase acuI could be involved in the linking of aculinic acid to an aculene A moiety produced by the aculene biosynthesis cluster and which leads to the production of aculin A. AcuI may also be involved in the attachment of proline to aculinic acid to form epi-aculins A and B. The chain is 6-methylsalicylic acid decarboxylase acuB from Aspergillus aculeatus (strain ATCC 16872 / CBS 172.66 / WB 5094).